The sequence spans 379 residues: MGCLGNSKTEDQRNEEKVQRETNKKIEKQLQKDKQVYRATHRLLLLGAGESGKSSIVKQMRILHVNGFNAEEKKTKVQDIKNNIKEAIETIVTAMGNLSPPVELVNPENQFRIDYILNLPNYKDFEFSPEFYEHTKTLWQDEGVRACYERSNEYQLIDCAQYFLDKIDIVKQNDYTPSDQDLLRCRVLTSGIFETKFQVDKVNFHMFDVGGQRDERRKWIQCFNDVTAIIFVVASSSYNMVIREDNHTNRLQEALNLFKSIWNNRWLRTISVILFLNKQDLLAEKVNAGKSKIEDYFPEFARYTTPDDATPEVGEDPRVTRAKYFIRDEFLRISTASGDGRHYCYPHFTCAVDTENIRRVFNDCRDIIQRMHLRQYELL.

The disordered stretch occupies residues 1 to 25 (MGCLGNSKTEDQRNEEKVQRETNKK). The N-palmitoyl glycine moiety is linked to residue G2. C3 is lipidated: S-palmitoyl cysteine. The span at 8–25 (KTEDQRNEEKVQRETNKK) shows a compositional bias: basic and acidic residues. A G-alpha domain is found at 39-379 (ATHRLLLLGA…RMHLRQYELL (341 aa)). The G1 motif stretch occupies residues 42–55 (RLLLLGAGESGKSS). GTP is bound by residues 47-55 (GAGESGKSS), 182-189 (LLRCRVLT), 208-212 (DVGGQ), 277-280 (NKQD), and A351. Mg(2+) contacts are provided by S54 and T189. The segment at 181–189 (DLLRCRVLT) is G2 motif. The interval 204 to 213 (FHMFDVGGQR) is G3 motif. The G4 motif stretch occupies residues 273–280 (ILFLNKQD). The tract at residues 349 to 354 (TCAVDT) is G5 motif.

The protein belongs to the G-alpha family. G(s) subfamily. In terms of assembly, heterotrimeric G proteins are composed of 3 units; alpha, beta and gamma. The alpha chain contains the guanine nucleotide binding site.

The protein localises to the cell membrane. Its function is as follows. Guanine nucleotide-binding proteins (G proteins) function as transducers in numerous signaling pathways controlled by G protein-coupled receptors (GPCRs). Signaling involves the activation of adenylyl cyclases, resulting in increased levels of the signaling molecule cAMP. GNAS functions downstream of several GPCRs, including beta-adrenergic receptors. Stimulates the Ras signaling pathway. This Xenopus laevis (African clawed frog) protein is Guanine nucleotide-binding protein G(s) subunit alpha (gnas).